The following is a 248-amino-acid chain: UPF0246 protein A1I_02510 (248 aa).

It belongs to the UPF0246 family.

This chain is UPF0246 protein A1I_02510, found in Rickettsia bellii (strain OSU 85-389).